Here is a 171-residue protein sequence, read N- to C-terminus: MKKPTSAPRSKAFGKQRRKTREELNQEARDRKRLKKHRGHAPGSRAAGGNSASGGGNQNQQKDPRIGSKTPVPLGVTEKVTQQHKPKSEKPMLSPQAELDLLETDERLDALLERLEAGETLSAEDQAWVDAKLDRIDELMQKLGLSYDDDDEDDEEDEKQEDMMRLLRGGN.

2 disordered regions span residues 1–99 and 145–171; these read MKKP…QAEL and LSYD…RGGN. Over residues 20-30 the composition is skewed to basic and acidic residues; sequence TREELNQEARD. Over residues 31–40 the composition is skewed to basic residues; the sequence is RKRLKKHRGH. Positions 147–160 are enriched in acidic residues; it reads YDDDDEDDEEDEKQ.

The protein belongs to the YihI family. Interacts with Der.

Functionally, a GTPase-activating protein (GAP) that modifies Der/EngA GTPase function. May play a role in ribosome biogenesis. The sequence is that of Der GTPase-activating protein YihI from Salmonella choleraesuis (strain SC-B67).